Reading from the N-terminus, the 313-residue chain is Porphobilinogen deaminase (313 aa).

Cys242 carries the post-translational modification S-(dipyrrolylmethanemethyl)cysteine.

This sequence belongs to the HMBS family. In terms of assembly, monomer. Dipyrromethane is required as a cofactor.

It carries out the reaction 4 porphobilinogen + H2O = hydroxymethylbilane + 4 NH4(+). It functions in the pathway porphyrin-containing compound metabolism; protoporphyrin-IX biosynthesis; coproporphyrinogen-III from 5-aminolevulinate: step 2/4. Its function is as follows. Tetrapolymerization of the monopyrrole PBG into the hydroxymethylbilane pre-uroporphyrinogen in several discrete steps. This chain is Porphobilinogen deaminase, found in Salmonella arizonae (strain ATCC BAA-731 / CDC346-86 / RSK2980).